We begin with the raw amino-acid sequence, 274 residues long: Exosome complex component Rrp42 (274 aa).

The protein belongs to the RNase PH family. Rrp42 subfamily. As to quaternary structure, component of the archaeal exosome complex. Forms a hexameric ring-like arrangement composed of 3 Rrp41-Rrp42 heterodimers. The hexameric ring associates with a trimer of Rrp4 and/or Csl4 subunits.

The protein resides in the cytoplasm. Its function is as follows. Non-catalytic component of the exosome, which is a complex involved in RNA degradation. Contributes to the structuring of the Rrp41 active site. This is Exosome complex component Rrp42 from Pyrobaculum aerophilum (strain ATCC 51768 / DSM 7523 / JCM 9630 / CIP 104966 / NBRC 100827 / IM2).